A 365-amino-acid chain; its full sequence is Endophilin-B1 (365 aa).

At methionine 1 the chain carries N-acetylmethionine. The membrane-binding amphipathic helix stretch occupies residues 1–30 (MNIMDFNVKKLAADAGTFLSRAVQFTEEKL). The segment at 1–37 (MNIMDFNVKKLAADAGTFLSRAVQFTEEKLGQAEKTE) is required for membrane binding. The BAR domain occupies 27–261 (EEKLGQAEKT…LGSFPSNYVS (235 aa)). Position 145 is a phosphothreonine; by CDK5 (threonine 145). The stretch at 156–185 (KTIAKERKLLQNKRLDLDAAKTRLKKAKAA) forms a coiled coil. An SH3 domain is found at 305 to 365 (SSTRKARVLY…VPITYLELLN (61 aa)).

It belongs to the endophilin family. As to quaternary structure, homodimer, and heterodimer with SH3GLB2. Binds BAX; induction of apoptosis augments BAX binding. Binds DNM1, HTT, AMPH, BIN1 and ARFGAP1. Interacts with UVRAG; UVRAG bridges the interaction to BECN1 indicative for an association with the PI3K complex II (PI3KC3-C2). In terms of processing, phosphorylated at Thr-145 by CDK5; this phosphorylation is required for autophagy induction in starved neurons and facilitates homodimerization. In terms of tissue distribution, expressed in brain, heart, lung and spleen. Low level in liver and testis.

The protein resides in the cytoplasm. The protein localises to the golgi apparatus membrane. It is found in the mitochondrion outer membrane. Its subcellular location is the cytoplasmic vesicle. It localises to the autophagosome membrane. The protein resides in the midbody. May be required for normal outer mitochondrial membrane dynamics. Required for coatomer-mediated retrograde transport in certain cells. May recruit other proteins to membranes with high curvature. May promote membrane fusion. Involved in activation of caspase-dependent apoptosis by promoting BAX/BAK1 activation. Involved in caspase-independent apoptosis during nutrition starvation and involved in the regulation of autophagy. Activates lipid kinase activity of PIK3C3 during autophagy probably by associating with the PI3K complex II (PI3KC3-C2). Associated with PI3KC3-C2 during autophagy may regulate the trafficking of ATG9A from the Golgi complex to the peripheral cytoplasm for the formation of autophagosomes by inducing Golgi membrane tubulation and fragmentation. Involved in regulation of degradative endocytic trafficking and cytokinesis, probably in the context of PI3KC3-C2. This chain is Endophilin-B1, found in Rattus norvegicus (Rat).